A 205-amino-acid polypeptide reads, in one-letter code: Suppressor of IKBKE 1 (205 aa).

Coiled coils occupy residues 4–32 (TIDKILQDAKTLLERLKDHDNAAESLIDQ) and 154–192 (KAIQLDEDQAYNIQERLAQLELENKELREILSVRNESLR).

The protein belongs to the SIKE family. Interacts with IKBKE and TBK1 via its coiled coil region. Interaction with TBK1 is disrupted upon viral infection or TLR3 stimulation. Interacts with CDC42BPB. Associates with the STRIPAK core complex composed of PP2A catalytic and scaffolding subunits, the striatins (PP2A regulatory subunits), the striatin-associated proteins MOB4, STRIP1 and STRIP2, PDCD10 and members of the STE20 kinases, such as STK24 and STK26.

It localises to the cytoplasm. Its function is as follows. Suppressor of IKK-epsilon. Associates with the striatin-interacting phosphatase and kinase (STRIPAK) core complex, forming the extended (SIKE1:SLMAP)STRIPAK complex. The (SIKE1:SLMAP)STRIPAK complex dephosphorylates STK3 leading to the inhibition of Hippo signaling and the control of cell growth. The polypeptide is Suppressor of IKBKE 1 (sike1) (Xenopus laevis (African clawed frog)).